Consider the following 394-residue polypeptide: NAD(P)H-quinone oxidoreductase subunit H (394 aa).

This sequence belongs to the complex I 49 kDa subunit family. As to quaternary structure, NDH-1 can be composed of about 15 different subunits; different subcomplexes with different compositions have been identified which probably have different functions.

It localises to the cellular thylakoid membrane. It catalyses the reaction a plastoquinone + NADH + (n+1) H(+)(in) = a plastoquinol + NAD(+) + n H(+)(out). The enzyme catalyses a plastoquinone + NADPH + (n+1) H(+)(in) = a plastoquinol + NADP(+) + n H(+)(out). In terms of biological role, NDH-1 shuttles electrons from an unknown electron donor, via FMN and iron-sulfur (Fe-S) centers, to quinones in the respiratory and/or the photosynthetic chain. The immediate electron acceptor for the enzyme in this species is believed to be plastoquinone. Couples the redox reaction to proton translocation, and thus conserves the redox energy in a proton gradient. Cyanobacterial NDH-1 also plays a role in inorganic carbon-concentration. This chain is NAD(P)H-quinone oxidoreductase subunit H, found in Nostoc punctiforme (strain ATCC 29133 / PCC 73102).